An 887-amino-acid chain; its full sequence is Lon protease homolog 2, peroxisomal (887 aa).

The region spanning 11–256 (LGILAFRNKV…KATELVDRHL (246 aa)) is the Lon N-terminal domain. Positions 72–101 (YPGGGTDSGERNVKSQPGLSDSRKADGKSQ) are disordered. 409–416 (GPPGVGKT) is an ATP binding site. Positions 693–878 (VSNPGVSVGL…EVLEQAFEGG (186 aa)) constitute a Lon proteolytic domain. Catalysis depends on residues Ser784 and Lys827. A Microbody targeting signal motif is present at residues 885-887 (ARL).

This sequence belongs to the peptidase S16 family.

It localises to the peroxisome matrix. It carries out the reaction Hydrolysis of proteins in presence of ATP.. ATP-dependent serine protease that mediates the selective degradation of misfolded and unassembled polypeptides in the peroxisomal matrix. Necessary for type 2 peroxisome targeting signal (PTS2)-containing protein processing and facilitates peroxisome matrix protein import. In Spinacia oleracea (Spinach), this protein is Lon protease homolog 2, peroxisomal.